The sequence spans 231 residues: 7-cyano-7-deazaguanine synthase (231 aa).

8–18 is an ATP binding site; sequence FSGGQDSTTCL. Zn(2+) contacts are provided by Cys-188, Cys-197, Cys-200, and Cys-203.

Belongs to the QueC family. Requires Zn(2+) as cofactor.

The enzyme catalyses 7-carboxy-7-deazaguanine + NH4(+) + ATP = 7-cyano-7-deazaguanine + ADP + phosphate + H2O + H(+). It participates in purine metabolism; 7-cyano-7-deazaguanine biosynthesis. Catalyzes the ATP-dependent conversion of 7-carboxy-7-deazaguanine (CDG) to 7-cyano-7-deazaguanine (preQ(0)). In Salmonella newport (strain SL254), this protein is 7-cyano-7-deazaguanine synthase.